The primary structure comprises 490 residues: Cytochrome P450 2C29 (490 aa).

The signal sequence occupies residues 1–25 (MDLVVFLALTLSCLILLSLWRQSSG). Lysine 249, lysine 252, and lysine 375 each carry N6-acetyllysine. Cysteine 435 provides a ligand contact to heme.

This sequence belongs to the cytochrome P450 family. Requires heme as cofactor. As to expression, expressed in liver as well as in extrahepatic tissues including brain, kidney, lung, heart, and intestine.

It localises to the endoplasmic reticulum membrane. Its subcellular location is the microsome membrane. The enzyme catalyses an organic molecule + reduced [NADPH--hemoprotein reductase] + O2 = an alcohol + oxidized [NADPH--hemoprotein reductase] + H2O + H(+). It catalyses the reaction (5Z,8Z,11Z,14Z)-eicosatetraenoate + reduced [NADPH--hemoprotein reductase] + O2 = 14,15-epoxy-(5Z,8Z,11Z)-eicosatrienoate + oxidized [NADPH--hemoprotein reductase] + H2O + H(+). The protein operates within lipid metabolism; arachidonate metabolism. Functionally, a cytochrome P450 monooxygenase that selectively catalyzes the epoxidation of 14,15 double bond of (5Z,8Z,11Z,14Z)-eicosatetraenoic acid (arachidonate) forming 14,15-epoxyeicosatrienoic acid (14,15-EET) regioisomer. Mechanistically, uses molecular oxygen inserting one oxygen atom into a substrate, and reducing the second into a water molecule, with two electrons provided by NADPH via cytochrome P450 reductase (CPR; NADPH--hemoprotein reductase). This is Cytochrome P450 2C29 from Mus musculus (Mouse).